The following is a 359-amino-acid chain: UPF0283 membrane protein Atu1356 (359 aa).

The segment at 1–39 (MKAPTQNDPQTRRPAAFTLETEEAARPSATQKRAPRSFD) is disordered. 2 helical membrane-spanning segments follow: residues 75–95 (FGKLGLGALGVLFSLAFGLWA) and 108–128 (WLGYTATIALIVALFAVLALV).

Belongs to the UPF0283 family.

The protein resides in the cell inner membrane. The polypeptide is UPF0283 membrane protein Atu1356 (Agrobacterium fabrum (strain C58 / ATCC 33970) (Agrobacterium tumefaciens (strain C58))).